The primary structure comprises 1392 residues: DNA-directed RNA polymerase subunit beta'' (1392 aa).

4 residues coordinate Zn(2+): Cys224, Cys295, Cys302, and Cys305.

The protein belongs to the RNA polymerase beta' chain family. RpoC2 subfamily. In terms of assembly, in plastids the minimal PEP RNA polymerase catalytic core is composed of four subunits: alpha, beta, beta', and beta''. When a (nuclear-encoded) sigma factor is associated with the core the holoenzyme is formed, which can initiate transcription. The cofactor is Zn(2+).

The protein resides in the plastid. The protein localises to the chloroplast. The catalysed reaction is RNA(n) + a ribonucleoside 5'-triphosphate = RNA(n+1) + diphosphate. Its function is as follows. DNA-dependent RNA polymerase catalyzes the transcription of DNA into RNA using the four ribonucleoside triphosphates as substrates. The polypeptide is DNA-directed RNA polymerase subunit beta'' (Solanum lycopersicum (Tomato)).